Reading from the N-terminus, the 455-residue chain is Probable glycine dehydrogenase (decarboxylating) subunit 1 (455 aa).

This sequence belongs to the GcvP family. N-terminal subunit subfamily. The glycine cleavage system is composed of four proteins: P, T, L and H. In this organism, the P 'protein' is a heterodimer of two subunits.

The enzyme catalyses N(6)-[(R)-lipoyl]-L-lysyl-[glycine-cleavage complex H protein] + glycine + H(+) = N(6)-[(R)-S(8)-aminomethyldihydrolipoyl]-L-lysyl-[glycine-cleavage complex H protein] + CO2. In terms of biological role, the glycine cleavage system catalyzes the degradation of glycine. The P protein binds the alpha-amino group of glycine through its pyridoxal phosphate cofactor; CO(2) is released and the remaining methylamine moiety is then transferred to the lipoamide cofactor of the H protein. The sequence is that of Probable glycine dehydrogenase (decarboxylating) subunit 1 from Francisella tularensis subsp. mediasiatica (strain FSC147).